The chain runs to 502 residues: MKAAITGLVATVTTFLAYIVFLSYTPRVDKKSPQFTPNTVPLVGSWSFFTQKWAFWQDCVAKSQTGHFSFWLGKYHVVGVSGAAARKVFLDNPNFDFVRGATLVGHGPDFVPPLHAIFHGNFQNGRSYFQRRLVDLQKSEQLGKRLPGVTRDARGAFEALRQHASGVMNPTDACYRLVVQQACRVVCSDEIADDPAVLARTQSVLSLLMHTSSIHAVALPYLPSLAKLKRRWGRYGLSRIVTPIVQRRLQKKKDAPRHDDVVQYMLDRGDSPEWMVAFFISTLFIASANAGYLSGAMLNILAYHPDWQARIYREIKTVAAAHAPNPHAPLVDQLDTIPLDAWESFFPSIDLCFKEAIRMWVAFPMIRLNMAPHAVPIPGTDEVVPAGTFASYNSTEVHFNPELYPDPYRYDPERFREGREEFKKEVYGFVGWGQGRHPCLGMRWAKIQLNIILAYALAMYEWSGCDEKGQPSTHFDRKTDLNAPGPSLPVGLFCKYVPRKEV.

A helical membrane pass occupies residues 4–26 (AITGLVATVTTFLAYIVFLSYTP). N393 carries N-linked (GlcNAc...) asparagine glycosylation. Residue C439 participates in heme binding.

The protein belongs to the cytochrome P450 family. Heme is required as a cofactor.

Its subcellular location is the membrane. It functions in the pathway secondary metabolite biosynthesis. Functionally, cytochrome P450 monooxygenase; part of the gene cluster that mediates the biosynthesis of the tetrahydroxanthone dimer secalonic acid D. The pathway begins with the synthesis of atrochrysone thioester by the polyketide synthase AacuL. The atrochrysone carboxyl ACP thioesterase AacuM then breaks the thioester bond and releases the atrochrysone carboxylic acid from AacuL. Atrochrysone carboxylic acid is decarboxylated by the decarboxylase AacuI, and oxidized by the anthrone oxygenase AacuG to yield emodin. Emodin is then reduced to emodin hydroquinone by a yet unidentified oxidoreductase. A-ring reduction by the short chain dehydrogenase AacuN, dehydration by the scytalone dehydratase-like protein AacuK and probable spontaneous re-oxidation, results in overall deoxygenation to chrysophanol. Baeyer-Villiger oxidation by the Baeyer-Villiger monooxygenase (BVMO) AacuH then yields monodictyphenone. Monodictyphenone is transformed into compounds with the tetrahydroxanthone skeleton via methylesterification by the methyltransferase AacuQ, followed by the action of the flavin-dependent monooxygenase AacuC, the isomerase AacuP, and the short chain dehydrogenase/reductase AacuF or AacuD. AacuF and AacuD should accept the same compound as a substrate but perform the ketoreduction with a different stereoselectivity, thus yielding blennolides B and A, respectively. In the final step of the biosynthesis, the cytochrome P450 monooxygenase AacuE accepts blennolide B and/or blennolide A to conduct the dimerization reaction to furnish the tetrahydroxanthone dimers, secalonic acids D, B, and F. This Aspergillus aculeatus (strain ATCC 16872 / CBS 172.66 / WB 5094) protein is Cytochrome P450 monooxygenase AacuE.